The chain runs to 752 residues: Protein WEAK CHLOROPLAST MOVEMENT UNDER BLUE LIGHT-like 2 (752 aa).

At S143 the chain carries Phosphoserine. Coiled-coil stretches lie at residues 186 to 557 (ERRK…SRAS) and 596 to 651 (ELSK…KEAM). The tract at residues 476-495 (KHDLSETRQRNREDTREEKC) is disordered. The segment covering 653–675 (KVEKARDGKVGMDHELRKWRSDN) has biased composition (basic and acidic residues). Residues 653-733 (KVEKARDGKV…ETETKKKKKR (81 aa)) are disordered. The segment covering 690 to 723 (KSKSALHQPTTFTFGEQASSSNVTPQASSSNVTP) has biased composition (polar residues).

This sequence belongs to the WEB family.

This is Protein WEAK CHLOROPLAST MOVEMENT UNDER BLUE LIGHT-like 2 (WEL2) from Arabidopsis thaliana (Mouse-ear cress).